A 138-amino-acid polypeptide reads, in one-letter code: Thyrotropin subunit beta (138 aa).

The N-terminal stretch at 1-20 is a signal peptide; it reads MTATFLMSLLFGLAFGQTMS. 6 cysteine pairs are disulfide-bonded: Cys-22-Cys-72, Cys-36-Cys-87, Cys-39-Cys-125, Cys-47-Cys-103, Cys-51-Cys-105, and Cys-108-Cys-115. A glycan (N-linked (GlcNAc...) asparagine) is linked at Asn-43. The propeptide occupies 133-138; sequence LVGFPV.

This sequence belongs to the glycoprotein hormones subunit beta family. In terms of assembly, heterodimer of a common alpha chain and a unique beta chain which confers biological specificity to thyrotropin, lutropin, follitropin and gonadotropin.

Its subcellular location is the secreted. Functionally, indispensable for the control of thyroid structure and metabolism. This is Thyrotropin subunit beta (TSHB) from Monodelphis domestica (Gray short-tailed opossum).